The following is a 186-amino-acid chain: Serine hydrolase RBBP9 (186 aa).

The tract at residues 63–67 is involved in binding to RB1; it reads LHCDE. Catalysis depends on charge relay system residues S75, D138, and H165.

Belongs to the RBBP9 family. Interacts with RB1; the interaction disrupts RB1 binding to E2F1. Interacts with RBL1 and RBL2. In terms of tissue distribution, highly expressed in the spleen, testis and kidney. Also found in the heart, liver, lung and brain.

The enzyme catalyses valacyclovir + H2O = acyclovir + L-valine + H(+). Serine hydrolase. Catalyzes the hydrolytic activation of amino acid ester of the antiviral prodrug valacyclovir to its corresponding active drug, acyclovir. May negatively regulate basal or autocrine TGF-beta signaling by suppressing SMAD2-SMAD3 phosphorylation. May play a role in the transformation process due to its capacity to confer resistance to the growth-inhibitory effects of TGF-beta through interaction with RB1 and the subsequent displacement of E2F1. The protein is Serine hydrolase RBBP9 of Rattus norvegicus (Rat).